Consider the following 320-residue polypeptide: tRNA dimethylallyltransferase (320 aa).

Position 17–24 (17–24 (GPTAVGKT)) interacts with ATP. 19–24 (TAVGKT) is a binding site for substrate. The interval 42–45 (DSMQ) is interaction with substrate tRNA.

This sequence belongs to the IPP transferase family. Monomer. Requires Mg(2+) as cofactor.

The catalysed reaction is adenosine(37) in tRNA + dimethylallyl diphosphate = N(6)-dimethylallyladenosine(37) in tRNA + diphosphate. Its function is as follows. Catalyzes the transfer of a dimethylallyl group onto the adenine at position 37 in tRNAs that read codons beginning with uridine, leading to the formation of N6-(dimethylallyl)adenosine (i(6)A). This chain is tRNA dimethylallyltransferase, found in Bacillus thuringiensis (strain Al Hakam).